A 259-amino-acid chain; its full sequence is Hemin import ATP-binding protein HmuV (259 aa).

An ABC transporter domain is found at 6-242; the sequence is IQGRDLCVTY…ERIEQVYGYQ (237 aa). Position 38 to 45 (38 to 45) interacts with ATP; that stretch reads GPNGAGKS.

It belongs to the ABC transporter superfamily. Heme (hemin) importer (TC 3.A.1.14.5) family. In terms of assembly, the complex is composed of two ATP-binding proteins (HmuV), two transmembrane proteins (HmuU) and a solute-binding protein (HmuT).

It localises to the cell inner membrane. Functionally, part of the ABC transporter complex HmuTUV involved in hemin import. Responsible for energy coupling to the transport system. The polypeptide is Hemin import ATP-binding protein HmuV (Vibrio cholerae serotype O1 (strain ATCC 39315 / El Tor Inaba N16961)).